A 471-amino-acid chain; its full sequence is UDP-N-acetylmuramate--L-alanine ligase (471 aa).

114-120 (GTHGKTT) lines the ATP pocket.

It belongs to the MurCDEF family.

It is found in the cytoplasm. The catalysed reaction is UDP-N-acetyl-alpha-D-muramate + L-alanine + ATP = UDP-N-acetyl-alpha-D-muramoyl-L-alanine + ADP + phosphate + H(+). It functions in the pathway cell wall biogenesis; peptidoglycan biosynthesis. Functionally, cell wall formation. This chain is UDP-N-acetylmuramate--L-alanine ligase, found in Brucella abortus (strain S19).